Reading from the N-terminus, the 82-residue chain is Diphthamide biosynthesis protein 3 (82 aa).

The DPH-type MB domain maps to 8-64 (IYDEVEIEDMTYDPALQTYSYPCPCGDKFEIALADLQDGQDIAVCPSCSLMVRVIFE). Cys30, Cys32, Cys52, and Cys55 together coordinate Fe cation.

Belongs to the DPH3 family. In terms of assembly, component of the 2-(3-amino-3-carboxypropyl)histidine synthase complex composed of dph-1, dph-2, dph-3 and a NADH-dependent reductase, predominantly cbr-1. It depends on Fe(2+) as a cofactor.

Its subcellular location is the cytoplasm. The protein localises to the nucleus. It carries out the reaction [3Fe-4S](1+)-[protein] + Fe(2+)-[Dph3] = [3Fe-4S](0)-[protein] + Fe(3+)-[Dph3]. The catalysed reaction is 2 [3Fe-4S](0)-[protein] + 2 Fe(2+)-[Dph3] + NADH = 2 [4Fe-4S](1+)-[protein] + 2 [Dph3] + NAD(+) + H(+). It participates in protein modification; peptidyl-diphthamide biosynthesis. In terms of biological role, required for the first step of diphthamide biosynthesis, a post-translational modification of histidine which occurs in elongation factor 2. Dph-1 and dph-2 transfer a 3-amino-3-carboxypropyl (ACP) group from S-adenosyl-L-methionine (SAM) to a histidine residue, the reaction is assisted by a reduction system comprising dph-3 and a NADH-dependent reductase, predominantly cbr-1. Acts as an electron donor to reduce the Fe-S cluster in dph1-dph2 keeping the [4Fe-4S] clusters in the active and reduced state. Restores iron to dph-1-dph-2 iron-sulfur clusters which have degraded from [4Fe-4S] to [3Fe-4S] by donating an iron atom to reform [4Fe-4S] clusters, in a manner dependent on the presence of elongation factor 2 and SAM. Associates with the elongator complex and is required for tRNA Wobble base modifications mediated by the elongator complex. The elongator complex is required for multiple tRNA modifications, including mcm5U (5-methoxycarbonylmethyl uridine), mcm5s 2U (5-methoxycarbonylmethyl-2-thiouridine), and ncm5U (5-carbamoylmethyl uridine). The protein is Diphthamide biosynthesis protein 3 (dph-3) of Neurospora crassa (strain ATCC 24698 / 74-OR23-1A / CBS 708.71 / DSM 1257 / FGSC 987).